Consider the following 432-residue polypeptide: Trigger factor (432 aa).

Residues 163–248 enclose the PPIase FKBP-type domain; sequence GDIAVIDFEG…LKALNKKELP (86 aa).

This sequence belongs to the FKBP-type PPIase family. Tig subfamily.

The protein localises to the cytoplasm. It catalyses the reaction [protein]-peptidylproline (omega=180) = [protein]-peptidylproline (omega=0). In terms of biological role, involved in protein export. Acts as a chaperone by maintaining the newly synthesized protein in an open conformation. Functions as a peptidyl-prolyl cis-trans isomerase. The sequence is that of Trigger factor from Thermoanaerobacter pseudethanolicus (strain ATCC 33223 / 39E) (Clostridium thermohydrosulfuricum).